Consider the following 286-residue polypeptide: Tyrosine recombinase Tlet_1492 (286 aa).

The region spanning 1-86 is the Core-binding (CB) domain; the sequence is MERILQNFSD…SLRSFFNYLQ (86 aa). The 174-residue stretch at 107-280 folds into the Tyr recombinase domain; the sequence is RIPDFLLPSE…VDQEKFDAIN (174 aa). Catalysis depends on residues R143, K168, H232, R235, and H258. Catalysis depends on Y267, which acts as the O-(3'-phospho-DNA)-tyrosine intermediate.

It belongs to the 'phage' integrase family.

The protein localises to the cytoplasm. Site-specific tyrosine recombinase, which acts by catalyzing the cutting and rejoining of the recombining DNA molecules. This chain is Tyrosine recombinase Tlet_1492, found in Pseudothermotoga lettingae (strain ATCC BAA-301 / DSM 14385 / NBRC 107922 / TMO) (Thermotoga lettingae).